A 372-amino-acid polypeptide reads, in one-letter code: Peroxisomal biogenesis factor 3 (372 aa).

Topologically, residues 1 to 15 are cytoplasmic; sequence MLRSMWNFLKRHKKK. The interval 1–45 is targeting to peroxisomes; the sequence is MLRSMWNFLKRHKKKCIFLGTVLGGVYILGKYGQKKLREIQEREA. The chain crosses the membrane as a helical span at residues 16–36; the sequence is CIFLGTVLGGVYILGKYGQKK. At 37-116 the chain is on the peroxisomal side; sequence LREIQEREAA…LKIISFTRSI (80 aa). A helical membrane pass occupies residues 117–140; the sequence is VAVYSTCMLVVLLRVQLNIIGGYI. Positions 120–136 are interaction with PEX19; that stretch reads YSTCMLVVLLRVQLNII. Residues 141 to 372 are Cytoplasmic-facing; that stretch reads YLDNATVGKN…AFSTPQQLEK (232 aa).

The protein belongs to the peroxin-3 family. As to quaternary structure, interacts with PEX19.

The protein localises to the peroxisome membrane. Functionally, involved in peroxisome biosynthesis and integrity. Assembles membrane vesicles before the matrix proteins are translocated. As a docking factor for PEX19, is necessary for the import of peroxisomal membrane proteins in the peroxisomes. The polypeptide is Peroxisomal biogenesis factor 3 (Pex3) (Rattus norvegicus (Rat)).